A 293-amino-acid chain; its full sequence is Lipoyl synthase (293 aa).

The [4Fe-4S] cluster site is built by cysteine 47, cysteine 52, cysteine 58, cysteine 73, cysteine 77, cysteine 80, and serine 285. One can recognise a Radical SAM core domain in the interval 59–274 (WSEGTATFMI…EKIGLELGFR (216 aa)).

The protein belongs to the radical SAM superfamily. Lipoyl synthase family. [4Fe-4S] cluster is required as a cofactor.

Its subcellular location is the cytoplasm. The enzyme catalyses [[Fe-S] cluster scaffold protein carrying a second [4Fe-4S](2+) cluster] + N(6)-octanoyl-L-lysyl-[protein] + 2 oxidized [2Fe-2S]-[ferredoxin] + 2 S-adenosyl-L-methionine + 4 H(+) = [[Fe-S] cluster scaffold protein] + N(6)-[(R)-dihydrolipoyl]-L-lysyl-[protein] + 4 Fe(3+) + 2 hydrogen sulfide + 2 5'-deoxyadenosine + 2 L-methionine + 2 reduced [2Fe-2S]-[ferredoxin]. Its pathway is protein modification; protein lipoylation via endogenous pathway; protein N(6)-(lipoyl)lysine from octanoyl-[acyl-carrier-protein]: step 2/2. Functionally, catalyzes the radical-mediated insertion of two sulfur atoms into the C-6 and C-8 positions of the octanoyl moiety bound to the lipoyl domains of lipoate-dependent enzymes, thereby converting the octanoylated domains into lipoylated derivatives. The sequence is that of Lipoyl synthase from Christiangramia forsetii (strain DSM 17595 / CGMCC 1.15422 / KT0803) (Gramella forsetii).